Consider the following 326-residue polypeptide: Gamma-resorcylate decarboxylase (326 aa).

Positions 8, 10, 164, and 287 each coordinate Mn(2+). Asp287 is a catalytic residue.

This sequence belongs to the metallo-dependent hydrolases superfamily. ACMSD family. In terms of assembly, homotetramer. It depends on Mn(2+) as a cofactor.

The catalysed reaction is 2,6-dihydroxybenzoate + H(+) = resorcinol + CO2. The enzyme catalyses 2,3-dihydroxybenzoate + H(+) = catechol + CO2. The protein operates within aromatic compound metabolism. With respect to regulation, activity is inhibited by 2-nitroresorcinol (2-NR). Its function is as follows. Involved in the gamma-resorcylate (2,6-dihydroxybenzoate) catabolism. Catalyzes the reversible decarboxylation of gamma-resorcylate to resorcinol. Also catalyzes the decarboxylation of 2,3-dihydroxybenzoate to catechol, 2,4,6-trihydroxybenzoate to benzene-1,3,5-triol, and 2,6-dihydroxy-4-methylbenzoate to 5-methylbenzene-1,3-diol. This Polaromonas sp. (strain JS666 / ATCC BAA-500) protein is Gamma-resorcylate decarboxylase.